Reading from the N-terminus, the 585-residue chain is Arginine--tRNA ligase (585 aa).

The short motif at 131-141 (ANPTGPMHVGH) is the 'HIGH' region element.

Belongs to the class-I aminoacyl-tRNA synthetase family. Monomer.

It localises to the cytoplasm. It carries out the reaction tRNA(Arg) + L-arginine + ATP = L-arginyl-tRNA(Arg) + AMP + diphosphate. The chain is Arginine--tRNA ligase from Rhizobium etli (strain ATCC 51251 / DSM 11541 / JCM 21823 / NBRC 15573 / CFN 42).